The sequence spans 343 residues: Phenylalanine--tRNA ligase alpha subunit (343 aa).

Glu-268 serves as a coordination point for Mg(2+).

Belongs to the class-II aminoacyl-tRNA synthetase family. Phe-tRNA synthetase alpha subunit type 1 subfamily. Tetramer of two alpha and two beta subunits. Mg(2+) serves as cofactor.

It is found in the cytoplasm. The enzyme catalyses tRNA(Phe) + L-phenylalanine + ATP = L-phenylalanyl-tRNA(Phe) + AMP + diphosphate + H(+). This is Phenylalanine--tRNA ligase alpha subunit from Cupriavidus necator (strain ATCC 17699 / DSM 428 / KCTC 22496 / NCIMB 10442 / H16 / Stanier 337) (Ralstonia eutropha).